Consider the following 700-residue polypeptide: Inhibitor of carbonic anhydrase (700 aa).

The first 19 residues, 1 to 19, serve as a signal peptide directing secretion; it reads MRLLICALLCLGTLGLCLA. Transferrin-like domains lie at 25 to 347 and 355 to 685; these read IRWC…NLKR and VKWC…NFRQ. 16 disulfide bridges follow: C28-C67, C38-C58, C137-C213, C172-C188, C175-C198, C185-C196, C246-C260, C358-C390, C368-C381, C415-C695, C438-C658, C470-C545, C494-C686, C504-C518, C515-C528, and C585-C599. N-linked (GlcNAc...) asparagine glycosylation occurs at N664.

It belongs to the transferrin family. Monomer. Interacts (via transferrin-like domain 2) with CA2. N-glycosylated. Detected in blood plasma, heart, kidney, liver, colon, lung, spleen, pancreas and testis (at protein level).

It is found in the secreted. Inhibitor for carbonic anhydrase 2 (CA2). Does not bind iron ions. The polypeptide is Inhibitor of carbonic anhydrase (Mus musculus (Mouse)).